The primary structure comprises 1385 residues: DNA-directed RNA polymerase subunit beta' (1385 aa).

Cys-75, Cys-77, Cys-90, and Cys-93 together coordinate Zn(2+). Mg(2+) is bound by residues Asp-466, Asp-468, and Asp-470. Zn(2+)-binding residues include Cys-809, Cys-883, Cys-890, and Cys-893.

The protein belongs to the RNA polymerase beta' chain family. In terms of assembly, the RNAP catalytic core consists of 2 alpha, 1 beta, 1 beta' and 1 omega subunit. When a sigma factor is associated with the core the holoenzyme is formed, which can initiate transcription. It depends on Mg(2+) as a cofactor. Zn(2+) serves as cofactor.

It catalyses the reaction RNA(n) + a ribonucleoside 5'-triphosphate = RNA(n+1) + diphosphate. DNA-dependent RNA polymerase catalyzes the transcription of DNA into RNA using the four ribonucleoside triphosphates as substrates. The chain is DNA-directed RNA polymerase subunit beta' from Nitratidesulfovibrio vulgaris (strain ATCC 29579 / DSM 644 / CCUG 34227 / NCIMB 8303 / VKM B-1760 / Hildenborough) (Desulfovibrio vulgaris).